A 304-amino-acid chain; its full sequence is Putative dihydroorotate dehydrogenase A (fumarate) (304 aa).

Residues Ser22 and Lys46–Gly47 each bind FMN. Substrate contacts are provided by residues Lys46 and Asn70–Leu74. FMN is bound by residues Asn100 and Asn128. Asn128 is a substrate binding site. Residue Cys131 is the Nucleophile of the active site. 2 residues coordinate FMN: Lys166 and Val192. Asn193–Thr194 is a binding site for substrate. FMN contacts are provided by residues Gly218, Gly244 to Gly245, and Gly266 to Thr267.

This sequence belongs to the dihydroorotate dehydrogenase family. Type 1 subfamily. Homodimer. FMN is required as a cofactor.

It is found in the cytoplasm. It carries out the reaction (S)-dihydroorotate + fumarate = orotate + succinate. Its pathway is pyrimidine metabolism; UMP biosynthesis via de novo pathway. Functionally, catalyzes the conversion of dihydroorotate to orotate with fumarate as the electron acceptor. This Solibacter usitatus (strain Ellin6076) protein is Putative dihydroorotate dehydrogenase A (fumarate) (pyrD).